A 493-amino-acid polypeptide reads, in one-letter code: MSETTQNEAPVAAQGASQHSNIVGRVTQVRGAVVDVQFEGTLPHILDALHVTFNGQTVVLEVAQEIGEHEVRCIAMDTTDGLMRGTEVVATGGQITVPVGPGTLGRILNVIGEPIDERGPVKSDKRYPIHRKAPSFDEQAAATEILVTGIKVVDLLCPYLKGGKVGLFGGAGVGKTVIIQELINNIAKAHGGVSVFAGVGERTREGNDLYYEMQDAGVIKLGEDTTEGSKVALVYGQMNEPPGARARIALSGLSLAEYFRDEEGQDVLFFVDNIFRFTQAGAEVSALLGRIPSAVGYQPTLATEMGALQERITSTKKGSITSVQAVYVPADDLTDPAPAATFAHLDATTVLNRSIAEMGIYPAVDPLDSTSRSLDPKIVGEEHYQVARDVQRILQTYKSLQDIIAILGMDELSEDDKQVVARARRIQRFLSQPFHVAEVFTGAPGKLVSLEDTVRSFKAIVAGEYDHLPEGAFYMVGSIEEAVAKAEKMKETA.

169-176 (GGAGVGKT) contributes to the ATP binding site.

This sequence belongs to the ATPase alpha/beta chains family. In terms of assembly, F-type ATPases have 2 components, CF(1) - the catalytic core - and CF(0) - the membrane proton channel. CF(1) has five subunits: alpha(3), beta(3), gamma(1), delta(1), epsilon(1). CF(0) has three main subunits: a(1), b(2) and c(9-12). The alpha and beta chains form an alternating ring which encloses part of the gamma chain. CF(1) is attached to CF(0) by a central stalk formed by the gamma and epsilon chains, while a peripheral stalk is formed by the delta and b chains.

Its subcellular location is the cell inner membrane. It catalyses the reaction ATP + H2O + 4 H(+)(in) = ADP + phosphate + 5 H(+)(out). Its function is as follows. Produces ATP from ADP in the presence of a proton gradient across the membrane. The catalytic sites are hosted primarily by the beta subunits. In Gluconacetobacter diazotrophicus (strain ATCC 49037 / DSM 5601 / CCUG 37298 / CIP 103539 / LMG 7603 / PAl5), this protein is ATP synthase subunit beta.